Here is a 174-residue protein sequence, read N- to C-terminus: Peptide deformylase (174 aa).

Fe cation contacts are provided by cysteine 96 and histidine 138. Residue glutamate 139 is part of the active site. Histidine 142 is a binding site for Fe cation.

The protein belongs to the polypeptide deformylase family. Fe(2+) is required as a cofactor.

The enzyme catalyses N-terminal N-formyl-L-methionyl-[peptide] + H2O = N-terminal L-methionyl-[peptide] + formate. Removes the formyl group from the N-terminal Met of newly synthesized proteins. Requires at least a dipeptide for an efficient rate of reaction. N-terminal L-methionine is a prerequisite for activity but the enzyme has broad specificity at other positions. The sequence is that of Peptide deformylase from Helicobacter pylori (strain G27).